The primary structure comprises 854 residues: DNA mismatch repair protein MutS (854 aa).

An ATP-binding site is contributed by 608-615 (GPNMAGKS).

Belongs to the DNA mismatch repair MutS family.

Functionally, this protein is involved in the repair of mismatches in DNA. It is possible that it carries out the mismatch recognition step. This protein has a weak ATPase activity. The protein is DNA mismatch repair protein MutS of Leuconostoc mesenteroides subsp. mesenteroides (strain ATCC 8293 / DSM 20343 / BCRC 11652 / CCM 1803 / JCM 6124 / NCDO 523 / NBRC 100496 / NCIMB 8023 / NCTC 12954 / NRRL B-1118 / 37Y).